Here is a 575-residue protein sequence, read N- to C-terminus: Transmembrane protein 108 (575 aa).

Residues 9-29 (YCQLLSFLLILALTEALAFAI) form a helical membrane-spanning segment. Residues 31 to 169 (EPSPRESLQV…TTTRRPPRPP (139 aa)) form an interaction with SH3GL2 region. A disordered region spans residues 65-398 (MLTPNPDGPP…PSRVSESTIS (334 aa)). Residues 74–87 (PSQAAAPMATPTPR) are compositionally biased toward low complexity. Residues 95–115 (HTISTIAATVTAPHSESSLST) show a composition bias toward polar residues. Positions 146–160 (PPGATSRPTTAPPRT) are enriched in low complexity. Positions 173-407 (RKGAGNSSRP…SGAKEETVAT (235 aa)) are interaction with DST (isoform 1). Positions 244-271 (YSSSPQPQTVAATTVPSNTSWAPTTTSL) are enriched in polar residues. A compositionally biased stretch (low complexity) spans 290–318 (TFTSQGGTPDATAASGAPVSPQAAPVPSQ). A compositionally biased stretch (polar residues) spans 329 to 352 (PSHSDSWLTVTPGTSRPLSTSSGV). The span at 353–366 (FTAATGPTPAAFDT) shows a compositional bias: low complexity. Residues 367 to 398 (SVSAPSQGIPQGASTTPQAPTHPSRVSESTIS) are compositionally biased toward polar residues. Residues 469–489 (IAWVILAISVPISSCSVLLTV) traverse the membrane as a helical segment. The interval 490–575 (CCMKRKKKTA…FVGNDQVSEI (86 aa)) is interaction with CYFIP2.

In terms of assembly, interacts with DST (isoform 1). Interacts with SH3GL2. Interacts (via N-terminus) with CYFIP1 and CYFIP2; the interactions associate TMEM108 with the WAVE1 complex. In terms of processing, glycosylated.

It is found in the membrane. It localises to the postsynaptic density. Its subcellular location is the endosome membrane. The protein resides in the cell projection. The protein localises to the axon. It is found in the dendrite. It localises to the early endosome. In terms of biological role, transmembrane protein required for proper cognitive functions. Involved in the development of dentate gyrus (DG) neuron circuitry, is necessary for AMPA receptors surface expression and proper excitatory postsynaptic currents of DG granule neurons. Regulates the organization and stability of the microtubule network of sensory neurons to allow axonal transport. Through the interaction with DST, mediates the docking of the dynein/dynactin motor complex to vesicle cargos for retrograde axonal transport. In hippocampal neurons, required for BDNF-dependent dendrite outgrowth. Cooperates with SH3GL2 and recruits the WAVE1 complex to facilitate actin-dependent BDNF:NTRK2 early endocytic trafficking and mediate signaling from early endosomes. This Homo sapiens (Human) protein is Transmembrane protein 108.